Here is a 400-residue protein sequence, read N- to C-terminus: 2'-5'-oligoadenylate synthase 1 (400 aa).

The interval 13-60 (DKFIEDYLLPDTCFRMQINHAIDIICGFLKERCFRGSSYPVCVSKVVK) is interaction with dsRNA. Position 63 (serine 63) interacts with ATP. 3 residues coordinate Mg(2+): aspartate 75, aspartate 77, and aspartate 148. The interval 200-210 (QRPTKLKSLIR) is interaction with dsRNA. Residues arginine 210, lysine 213, and glutamine 229 each coordinate ATP. A lipid anchor (S-geranylgeranyl cysteine) is attached at cysteine 397.

It belongs to the 2-5A synthase family. Monomer. Homotetramer. Requires Mg(2+) as cofactor. Post-translationally, prenylated at C-terminal. C-terminal prenylation is necessary to initiate a block to SARS-CoV-2 and is associated with protection from severe COVID-1. The prenylated form is targeted to perinuclear structures rich in viral dsRNA, whereas the non-prenylated form is diffusely localized and unable to initiate a detectable block to SARS-CoV-2 replication. C-terminal prenylation is also necessary to initiate a block to cardiovirus EMCV. In terms of processing, not prenylated at C-terminal. The non-prenylated form is diffusely localized and unable to initiate a detectable block to SARS-CoV-2 replication. In terms of tissue distribution, expressed in lungs.

The protein resides in the cytoplasm. The protein localises to the mitochondrion. It localises to the nucleus. Its subcellular location is the microsome. It is found in the endoplasmic reticulum. The protein resides in the secreted. It catalyses the reaction 3 ATP = 5'-triphosphoadenylyl-(2'-&gt;5')-adenylyl-(2'-&gt;5')-adenosine + 2 diphosphate. With respect to regulation, produced as a latent enzyme which is activated by dsRNA generated during the course of viral infection. The dsRNA activator must be at least 15 nucleotides long, and no modification of the 2'-hydroxyl group is tolerated. ssRNA or dsDNA do not act as activators. In terms of biological role, interferon-induced, dsRNA-activated antiviral enzyme which plays a critical role in cellular innate antiviral response. In addition, it may also play a role in other cellular processes such as apoptosis, cell growth, differentiation and gene regulation. Synthesizes higher oligomers of 2'-5'-oligoadenylates (2-5A) from ATP which then bind to the inactive monomeric form of ribonuclease L (RNase L) leading to its dimerization and subsequent activation. Activation of RNase L leads to degradation of cellular as well as viral RNA, resulting in the inhibition of protein synthesis, thus terminating viral replication. Can mediate the antiviral effect via the classical RNase L-dependent pathway or an alternative antiviral pathway independent of RNase L. The secreted form displays antiviral effect against vesicular stomatitis virus (VSV), herpes simplex virus type 2 (HSV-2), and encephalomyocarditis virus (EMCV) and stimulates the alternative antiviral pathway independent of RNase L. When prenylated at C-terminal, acts as a double-stranded RNA (dsRNA) sensor specifically targeted to membranous replicative organelles in SARS coronavirus-2/SARS-CoV-2 infected cells where it binds to dsRNA structures in the SARS-CoV-2 5'-UTR and initiates a potent block to SARS-CoV-2 replication. Recognizes short stretches of dsRNA and activates RNase L. The binding is remarkably specific, with two conserved stem loops in the SARS-CoV-2 5'- untranslated region (UTR) constituting the principal viral target. The same mechanism is necessary to initiate a block to cardiovirus EMCV. Its function is as follows. Not prenylated at C-terminal, is diffusely localized and unable to initiate a detectable block to SARS-CoV-2 replication. The chain is 2'-5'-oligoadenylate synthase 1 (OAS1) from Homo sapiens (Human).